The primary structure comprises 86 residues: Muscarinic toxin 7 (86 aa).

Residues 1–21 form the signal peptide; the sequence is MKTLLLTLVVVTIVCLDLGYT. Finger loop regions lie at residues 23–37, 44–63, and 66–78; these read TCVK…TSED, LCFK…TRGC, and TCPK…VINC. Disulfide bonds link C24–C45, C38–C63, C67–C78, and C79–C84.

This sequence belongs to the three-finger toxin family. Short-chain subfamily. Aminergic toxin sub-subfamily. Expressed by the venom gland.

The protein resides in the secreted. Its function is as follows. Binds specifically and irreversibly to an allosteric site of the muscarinic acetylcholine M1 receptor (CHRM1) at subnanomolar concentrations and shows a very slow dissociation rate. It also inhibits agonist-mediated guanosine 5'-O-(3'-thiotriphosphate) (GTP-g-S) binding and downstream signaling, and decreases the dissociation rate of orthosteric antagonists (N-methylscopolamine (NMS) or pirenzepine). Is a potent negative allosteric modulator (NAM) for CHRM1 activation and a positive allosteric modulator (PAM) for antagonist binding. The sequence is that of Muscarinic toxin 7 from Dendroaspis angusticeps (Eastern green mamba).